The primary structure comprises 447 residues: Na(+)-translocating NADH-quinone reductase subunit A (447 aa).

The protein belongs to the NqrA family. Composed of six subunits; NqrA, NqrB, NqrC, NqrD, NqrE and NqrF.

It catalyses the reaction a ubiquinone + n Na(+)(in) + NADH + H(+) = a ubiquinol + n Na(+)(out) + NAD(+). In terms of biological role, NQR complex catalyzes the reduction of ubiquinone-1 to ubiquinol by two successive reactions, coupled with the transport of Na(+) ions from the cytoplasm to the periplasm. NqrA to NqrE are probably involved in the second step, the conversion of ubisemiquinone to ubiquinol. The polypeptide is Na(+)-translocating NADH-quinone reductase subunit A (Cellvibrio japonicus (strain Ueda107) (Pseudomonas fluorescens subsp. cellulosa)).